We begin with the raw amino-acid sequence, 508 residues long: Photosystem II CP47 reaction center protein (508 aa).

Transmembrane regions (helical) follow at residues 21–36, 101–115, 140–156, 203–218, 237–252, and 457–472; these read SVHL…WAGS, IILS…IWHW, GIHL…FGAF, IAAG…FHLS, VLSS…AFVV, and TFAL…HGAR.

This sequence belongs to the PsbB/PsbC family. PsbB subfamily. In terms of assembly, PSII is composed of 1 copy each of membrane proteins PsbA, PsbB, PsbC, PsbD, PsbE, PsbF, PsbH, PsbI, PsbJ, PsbK, PsbL, PsbM, PsbT, PsbX, PsbY, PsbZ, Psb30/Ycf12, at least 3 peripheral proteins of the oxygen-evolving complex and a large number of cofactors. It forms dimeric complexes. Binds multiple chlorophylls. PSII binds additional chlorophylls, carotenoids and specific lipids. serves as cofactor.

Its subcellular location is the plastid. The protein localises to the chloroplast thylakoid membrane. In terms of biological role, one of the components of the core complex of photosystem II (PSII). It binds chlorophyll and helps catalyze the primary light-induced photochemical processes of PSII. PSII is a light-driven water:plastoquinone oxidoreductase, using light energy to abstract electrons from H(2)O, generating O(2) and a proton gradient subsequently used for ATP formation. This Adiantum capillus-veneris (Maidenhair fern) protein is Photosystem II CP47 reaction center protein.